A 238-amino-acid chain; its full sequence is 4-hydroxy-tetrahydrodipicolinate reductase (238 aa).

12–17 lines the NAD(+) pocket; sequence GASGRM. Position 40 (R40) interacts with NADP(+). NAD(+) is bound by residues 93–95 and 117–120; these read GTT and ASNF. The active-site Proton donor/acceptor is H149. H150 serves as a coordination point for (S)-2,3,4,5-tetrahydrodipicolinate. K153 (proton donor) is an active-site residue. 159 to 160 is a binding site for (S)-2,3,4,5-tetrahydrodipicolinate; it reads GT.

Belongs to the DapB family.

The protein resides in the cytoplasm. It catalyses the reaction (S)-2,3,4,5-tetrahydrodipicolinate + NAD(+) + H2O = (2S,4S)-4-hydroxy-2,3,4,5-tetrahydrodipicolinate + NADH + H(+). The enzyme catalyses (S)-2,3,4,5-tetrahydrodipicolinate + NADP(+) + H2O = (2S,4S)-4-hydroxy-2,3,4,5-tetrahydrodipicolinate + NADPH + H(+). It participates in amino-acid biosynthesis; L-lysine biosynthesis via DAP pathway; (S)-tetrahydrodipicolinate from L-aspartate: step 4/4. In terms of biological role, catalyzes the conversion of 4-hydroxy-tetrahydrodipicolinate (HTPA) to tetrahydrodipicolinate. The chain is 4-hydroxy-tetrahydrodipicolinate reductase from Xanthomonas axonopodis pv. citri (strain 306).